The chain runs to 232 residues: Probable thiopurine S-methyltransferase (232 aa).

Residues 14 to 25 (WENRWQEGRTGF), Leu-54, Glu-75, and Arg-137 each bind S-adenosyl-L-methionine. Residue Phe-25 participates in substrate binding.

Belongs to the class I-like SAM-binding methyltransferase superfamily. TPMT family.

Its subcellular location is the cytoplasm. It carries out the reaction S-adenosyl-L-methionine + a thiopurine = S-adenosyl-L-homocysteine + a thiopurine S-methylether.. The protein is Probable thiopurine S-methyltransferase (tpmt) of Danio rerio (Zebrafish).